The following is a 68-amino-acid chain: Large ribosomal subunit protein uL29 (68 aa).

Belongs to the universal ribosomal protein uL29 family.

The polypeptide is Large ribosomal subunit protein uL29 (Bradyrhizobium sp. (strain BTAi1 / ATCC BAA-1182)).